Consider the following 373-residue polypeptide: 2-phosphonomethylmalate synthase (373 aa).

A Pyruvate carboxyltransferase domain is found at 5 to 256 (LVLEDTTLRD…DLGIDLTKLK (252 aa)).

Belongs to the alpha-IPM synthase/homocitrate synthase family.

It carries out the reaction 3-phosphonopyruvate + acetyl-CoA + H2O = (R)-2-(phosphonomethyl)malate + CoA + H(+). It participates in antibiotic biosynthesis. Functionally, acyltransferase involved in the biosynthesis of the phosphonate antibiotic FR-900098, a potent antimalarial agent that acts as an inhibitor of 1-deoxy-D-xylulose 5-phosphate reductoisomerase (DXR), the first enzyme in the nonmevalonate pathway for isoprenoid biosynthesis. Catalyzes the condensation between acetyl-CoA and phosphonopyruvate to yield (R)-2-(phosphonomethyl)malate. The chain is 2-phosphonomethylmalate synthase from Streptomyces rubellomurinus (strain ATCC 31215).